Reading from the N-terminus, the 209-residue chain is Chalcone isomerase-like protein 2 (209 aa).

It belongs to the chalcone isomerase family. Component an active demethylxanthohumol (DMX) biosynthetic metabolon in glandular trichomes (lupulin glands) that encompasses a chalcone synthase (CHS) and a membrane-bound prenyltransferase. Interacts with CHS_H1 and PT1L. As to expression, mostly expressed in glandular trichomes (lupulin glands), and, to a lower extent, in cones, cones bracts, leaves, stems and roots.

It localises to the cytoplasm. The enzyme catalyses a chalcone = a flavanone.. It functions in the pathway secondary metabolite biosynthesis; flavonoid biosynthesis. Its function is as follows. Involved in the biosynthesis of prenylated phenolics natural products which contribute to the bitter taste of beer and display broad biological activities. Involved in anthocyanin biosynthesis. Polyketide binding proteins (PBP) which promotes the catalytic activities of CHS_H1 and PT1L and triggers demethylxanthohumol (DMX) production. The chain is Chalcone isomerase-like protein 2 from Humulus lupulus (European hop).